The sequence spans 427 residues: Enolase (427 aa).

Glutamine 163 lines the (2R)-2-phosphoglycerate pocket. The active-site Proton donor is the glutamate 205. Residues aspartate 242, glutamate 285, and aspartate 312 each contribute to the Mg(2+) site. (2R)-2-phosphoglycerate-binding residues include lysine 337, arginine 366, serine 367, and lysine 388. Residue lysine 337 is the Proton acceptor of the active site.

This sequence belongs to the enolase family. Requires Mg(2+) as cofactor.

It localises to the cytoplasm. The protein resides in the secreted. Its subcellular location is the cell surface. It carries out the reaction (2R)-2-phosphoglycerate = phosphoenolpyruvate + H2O. The protein operates within carbohydrate degradation; glycolysis; pyruvate from D-glyceraldehyde 3-phosphate: step 4/5. Functionally, catalyzes the reversible conversion of 2-phosphoglycerate (2-PG) into phosphoenolpyruvate (PEP). It is essential for the degradation of carbohydrates via glycolysis. This chain is Enolase, found in Rhodopseudomonas palustris (strain ATCC BAA-98 / CGA009).